The primary structure comprises 336 residues: Fructose-1,6-bisphosphatase class 1 (336 aa).

E90, D112, L114, and D115 together coordinate Mg(2+). Residues 115 to 118 (DGSS), N211, and K277 contribute to the substrate site. E283 serves as a coordination point for Mg(2+).

The protein belongs to the FBPase class 1 family. As to quaternary structure, homotetramer. Mg(2+) is required as a cofactor.

It is found in the cytoplasm. It carries out the reaction beta-D-fructose 1,6-bisphosphate + H2O = beta-D-fructose 6-phosphate + phosphate. The protein operates within carbohydrate biosynthesis; gluconeogenesis. This is Fructose-1,6-bisphosphatase class 1 from Pseudomonas putida (strain W619).